A 541-amino-acid polypeptide reads, in one-letter code: Glucose-6-phosphate isomerase (541 aa).

Residue glutamate 346 is the Proton donor of the active site. Catalysis depends on residues histidine 377 and lysine 506.

This sequence belongs to the GPI family.

Its subcellular location is the cytoplasm. The catalysed reaction is alpha-D-glucose 6-phosphate = beta-D-fructose 6-phosphate. The protein operates within carbohydrate biosynthesis; gluconeogenesis. It functions in the pathway carbohydrate degradation; glycolysis; D-glyceraldehyde 3-phosphate and glycerone phosphate from D-glucose: step 2/4. In terms of biological role, catalyzes the reversible isomerization of glucose-6-phosphate to fructose-6-phosphate. This is Glucose-6-phosphate isomerase from Rhizobium rhizogenes (strain K84 / ATCC BAA-868) (Agrobacterium radiobacter).